A 470-amino-acid polypeptide reads, in one-letter code: MSTTTPPGQSALPPEAWAPLLRLSRLAGRPLERFLHIEAASGILLLVAAAIALLWANSPWAESYAHFWHTPLGIRVGDFTFERSLEWVVNDGLMAIFFFVVGMEIRREVHQGELSELRRAALPAAAALGGMLVPAGLYLLLADTPDTRSGWGVPMATDIAFAVGILTLLGSRVPPALRVLLLALAVIDDLGAIIVIAVFYSSGVAITGLLVAALGIVGVFAMQRFGVRSKWAYIVPAFVAWAGVYSAGIHPTIAGVIIGLITPVRTWLGPEGFVTGARTELEHIAQAQPGELSSHHLSETLRRVDAARREAMSPSESLIATLHPWVAFGIMPVFALANAGVPISSEPLDAASWTVALATATGLLVGKPLGVIGACWLALRLRLATLPKGLGMRELLVLGSTAGIGFTMALFIAQLAFTETKLLAAGKLGVLAASGAAAVVALVLGRWLLTTSARPGAARSVDEAERSTAL.

A run of 11 helical transmembrane segments spans residues 34-54 (FLHI…IALL), 85-105 (LEWV…GMEI), 121-141 (ALPA…YLLL), 150-170 (GWGV…TLLG), 179-199 (VLLL…IAVF), 202-222 (SGVA…VFAM), 241-261 (WAGV…IGLI), 317-337 (SLIA…FALA), 357-377 (LATA…ACWL), 395-415 (LLVL…IAQL), and 423-443 (LAAG…VALV).

The protein belongs to the NhaA Na(+)/H(+) (TC 2.A.33) antiporter family.

It localises to the cell inner membrane. It carries out the reaction Na(+)(in) + 2 H(+)(out) = Na(+)(out) + 2 H(+)(in). Na(+)/H(+) antiporter that extrudes sodium in exchange for external protons. The sequence is that of Na(+)/H(+) antiporter NhaA 2 from Myxococcus xanthus (strain DK1622).